A 137-amino-acid polypeptide reads, in one-letter code: Protein E6 (137 aa).

Zinc fingers lie at residues 17-53 and 90-127; these read CVWC…CTTC and CCYC…CYDC.

It belongs to the papillomaviridae E6 protein family. Forms homodimers. Interacts with ubiquitin-protein ligase UBE3A/E6-AP; this interaction stimulates UBE3A ubiquitin activity. Interacts with host BAK1.

It localises to the host cytoplasm. It is found in the host nucleus. Its function is as follows. Plays a major role in the induction and maintenance of cellular transformation. E6 associates with host UBE3A/E6-AP ubiquitin-protein ligase and modulates its activity. Protects host keratinocytes from apoptosis by mediating the degradation of host BAK1. May also inhibit host immune response. The chain is Protein E6 from Bos taurus (Bovine).